The sequence spans 95 residues: Large ribosomal subunit protein uL23 (95 aa).

Belongs to the universal ribosomal protein uL23 family. Part of the 50S ribosomal subunit. Contacts protein L29, and trigger factor when it is bound to the ribosome.

In terms of biological role, one of the early assembly proteins it binds 23S rRNA. One of the proteins that surrounds the polypeptide exit tunnel on the outside of the ribosome. Forms the main docking site for trigger factor binding to the ribosome. This Lawsonia intracellularis (strain PHE/MN1-00) protein is Large ribosomal subunit protein uL23.